The chain runs to 745 residues: Prolyl oligopeptidase ophP (745 aa).

Active-site charge relay system residues include S580, D665, and H701.

It belongs to the peptidase S9A family. As to quaternary structure, monomer.

It catalyses the reaction Hydrolysis of Pro-|-Xaa &gt;&gt; Ala-|-Xaa in oligopeptides.. Its pathway is mycotoxin biosynthesis. Its function is as follows. Prolyl oligopeptidase; part of the gene cluster that mediates the biosynthesis of omphalotin A, a highly methylated cyclic dodecapeptide with nematodicidal activity. Excises and catalyzes the macrocyclization of the methylated core peptide of OphMA to yield omphalotin A. OphP works in a two-step fashion with an initial cleavage at the N-terminus, followed by a second cleavage at the C-terminus of the core peptide. According to this mechanism, the free N-terminus of the core peptide, generated by the first cleavage, attacks the covalent intermediate of the second cleavage, which results in macrocyclization of the core peptide. In Omphalotus olearius (Jack o'lantern), this protein is Prolyl oligopeptidase ophP.